A 451-amino-acid polypeptide reads, in one-letter code: Tubulin alpha-1A chain (451 aa).

The MREC motif signature appears at 1-4; it reads MREC. GTP contacts are provided by Q11, E71, S140, G144, T145, T179, N206, and N228. E71 contacts Mg(2+). E254 is an active-site residue. The tract at residues 432–451 is disordered; it reads YEEVGVDSVEGEGEEEGEEY. E445 is modified (5-glutamyl polyglutamate).

The protein belongs to the tubulin family. In terms of assembly, dimer of alpha and beta chains. A typical microtubule is a hollow water-filled tube with an outer diameter of 25 nm and an inner diameter of 15 nM. Alpha-beta heterodimers associate head-to-tail to form protofilaments running lengthwise along the microtubule wall with the beta-tubulin subunit facing the microtubule plus end conferring a structural polarity. Microtubules usually have 13 protofilaments but different protofilament numbers can be found in some organisms and specialized cells. Requires Mg(2+) as cofactor. In terms of processing, some glutamate residues at the C-terminus are polyglycylated, resulting in polyglycine chains on the gamma-carboxyl group. Glycylation is mainly limited to tubulin incorporated into axonemes (cilia and flagella) whereas glutamylation is prevalent in neuronal cells, centrioles, axonemes, and the mitotic spindle. Both modifications can coexist on the same protein on adjacent residues, and lowering polyglycylation levels increases polyglutamylation, and reciprocally. The precise function of polyglycylation is still unclear. Some glutamate residues at the C-terminus are polyglutamylated, resulting in polyglutamate chains on the gamma-carboxyl group. Polyglutamylation plays a key role in microtubule severing by spastin (SPAST). SPAST preferentially recognizes and acts on microtubules decorated with short polyglutamate tails: severing activity by SPAST increases as the number of glutamates per tubulin rises from one to eight, but decreases beyond this glutamylation threshold. Post-translationally, undergoes a tyrosination/detyrosination cycle, the cyclic removal and re-addition of a C-terminal tyrosine residue by the enzymes tubulin tyrosine carboxypeptidase (MATCAP1, VASH1 or VASH2) and tubulin tyrosine ligase (TTL), respectively. In terms of processing, tyrosination promotes microtubule interaction with CAP-Gly microtubule plus-end tracking proteins. Tyrosinated tubulins regulate the initiation of dynein-driven motility. Detyrosination is involved in metaphase plate congression by guiding chromosomes during mitosis. Detyrosination increases microtubules-dependent mechanotransduction in dystrophic cardiac and skeletal muscle. In cardiomyocytes, detyrosinated microtubules are required to resist to contractile compression during contraction.

It is found in the cytoplasm. The protein resides in the cytoskeleton. The enzyme catalyses GTP + H2O = GDP + phosphate + H(+). Functionally, tubulin is the major constituent of microtubules, a cylinder consisting of laterally associated linear protofilaments composed of alpha- and beta-tubulin heterodimers. Microtubules grow by the addition of GTP-tubulin dimers to the microtubule end, where a stabilizing cap forms. Below the cap, tubulin dimers are in GDP-bound state, owing to GTPase activity of alpha-tubulin. This chain is Tubulin alpha-1A chain (TUBA1A), found in Gallus gallus (Chicken).